The sequence spans 140 residues: Organic hydroperoxide resistance protein-like (140 aa).

Belongs to the OsmC/Ohr family.

The sequence is that of Organic hydroperoxide resistance protein-like from Staphylococcus aureus (strain MSSA476).